Here is a 1233-residue protein sequence, read N- to C-terminus: ATP-dependent helicase/nuclease subunit A (1233 aa).

A UvrD-like helicase ATP-binding domain is found at 3 to 474 (TKWTEEQKQA…ILLYKNFRSR (472 aa)). 24-31 (AAAGSGKT) is a binding site for ATP. One can recognise a UvrD-like helicase C-terminal domain in the interval 518–809 (VTGGAVELHL…RIMSIHKSKG (292 aa)). The disordered stretch occupies residues 533–555 (VEEEVEEKEEEKNEEKDFEEEEE).

It belongs to the helicase family. AddA subfamily. As to quaternary structure, heterodimer of AddA and AddB/RexB. Requires Mg(2+) as cofactor.

The enzyme catalyses Couples ATP hydrolysis with the unwinding of duplex DNA by translocating in the 3'-5' direction.. It carries out the reaction ATP + H2O = ADP + phosphate + H(+). The heterodimer acts as both an ATP-dependent DNA helicase and an ATP-dependent, dual-direction single-stranded exonuclease. Recognizes the chi site generating a DNA molecule suitable for the initiation of homologous recombination. The AddA nuclease domain is required for chi fragment generation; this subunit has the helicase and 3' -&gt; 5' nuclease activities. This Thermoanaerobacter sp. (strain X514) protein is ATP-dependent helicase/nuclease subunit A.